We begin with the raw amino-acid sequence, 105 residues long: DNA-binding transcriptional regulator BolA (105 aa).

Belongs to the BolA/IbaG family.

Functionally, transcriptional regulator that plays an important role in general stress response. Has many effects on cell morphology, cell growth and cell division. Acts by regulating the transcription of many genes, including dacA (PBP-5), dacC (PBP-6), ampC and mreB. Probably involved in the coordination of genes that adapt the cell physiology in order to enhance cell adaptation and survival under stress conditions. Essential for normal cell morphology in stationary phase and under conditions of starvation. Also regulates a complex network of genes encoding proteins related to biofilm development, and negatively modulates flagellar biosynthesis and swimming capacity. Could be a motile/adhesive transcriptional switch, specifically involved in the transition between the planktonic and the attachment stage of biofilm formation. Overexpression produces round cell shape, impairs cell growth rate and induces biofilm development. This is DNA-binding transcriptional regulator BolA from Escherichia coli (strain K12).